Reading from the N-terminus, the 400-residue chain is Enoyl-[acyl-carrier-protein] reductase [NADH] 1 (400 aa).

Residues 48–53, 74–75, 111–112, and 139–140 contribute to the NAD(+) site; these read GASSGY, FE, DA, and LA. Tyr225 serves as a coordination point for substrate. The Proton donor role is filled by Tyr235. NAD(+) is bound by residues Lys244 and 273–275; that span reads VVT.

The protein belongs to the TER reductase family. In terms of assembly, monomer.

The catalysed reaction is a 2,3-saturated acyl-[ACP] + NAD(+) = a (2E)-enoyl-[ACP] + NADH + H(+). It participates in lipid metabolism; fatty acid biosynthesis. Functionally, involved in the final reduction of the elongation cycle of fatty acid synthesis (FAS II). Catalyzes the reduction of a carbon-carbon double bond in an enoyl moiety that is covalently linked to an acyl carrier protein (ACP). The protein is Enoyl-[acyl-carrier-protein] reductase [NADH] 1 of Vibrio vulnificus (strain YJ016).